Here is a 206-residue protein sequence, read N- to C-terminus: FMN-dependent NADH:quinone oxidoreductase (206 aa).

Residues 15–17 (SVS), 94–97 (MYNF), and 138–141 (TRGG) contribute to the FMN site.

The protein belongs to the azoreductase type 1 family. Homodimer. Requires FMN as cofactor.

It catalyses the reaction 2 a quinone + NADH + H(+) = 2 a 1,4-benzosemiquinone + NAD(+). The enzyme catalyses N,N-dimethyl-1,4-phenylenediamine + anthranilate + 2 NAD(+) = 2-(4-dimethylaminophenyl)diazenylbenzoate + 2 NADH + 2 H(+). Its function is as follows. Quinone reductase that provides resistance to thiol-specific stress caused by electrophilic quinones. Also exhibits azoreductase activity. Catalyzes the reductive cleavage of the azo bond in aromatic azo compounds to the corresponding amines. This chain is FMN-dependent NADH:quinone oxidoreductase, found in Sinorhizobium medicae (strain WSM419) (Ensifer medicae).